The following is a 194-amino-acid chain: BCL2/adenovirus E1B 19 kDa protein-interacting protein 3 (194 aa).

Residues 1–102 are disordered; the sequence is MSQNGAPGMQ…SQSEEDDIER (102 aa). Positions 42–55 are enriched in basic and acidic residues; that stretch reads DMEKILLDAQHESG. Phosphoserine is present on residues S54, S66, S86, S92, and S95. A compositionally biased stretch (low complexity) spans 56–69; it reads RSSSKSSHCDSPPR. Residues 78 to 88 are compositionally biased toward basic and acidic residues; sequence RASETDTHSIG. Residues 100–125 carry the BH3 motif; it reads IERRKEVESILKKNSDWIWDWSSRPE. The chain crosses the membrane as a helical span at residues 164–184; that stretch reads VFLPSLLLSHLLAIGLGIYIG.

This sequence belongs to the NIP3 family. Homodimer. Binds to BCL2. Interacts with BNIP3L and ACAA2. Interacts (via BH3 domain) with SPATA18 (via coiled-coil domains). Interacts with BOK; promotes BOK oligomerization. Interacts with PPTC7; this interaction promotes BNIP3 degradation. In terms of assembly, (Microbial infection) Interacts with adenovirus E1B 19 kDa protein. As to quaternary structure, (Microbial infection) Interacts with Epstein-Barr virus BHRF1.

It localises to the mitochondrion. The protein resides in the mitochondrion outer membrane. Functionally, apoptosis-inducing protein that can overcome BCL2 suppression. May play a role in repartitioning calcium between the two major intracellular calcium stores in association with BCL2. Involved in mitochondrial quality control via its interaction with SPATA18/MIEAP: in response to mitochondrial damage, participates in mitochondrial protein catabolic process (also named MALM) leading to the degradation of damaged proteins inside mitochondria. The physical interaction of SPATA18/MIEAP, BNIP3 and BNIP3L/NIX at the mitochondrial outer membrane regulates the opening of a pore in the mitochondrial double membrane in order to mediate the translocation of lysosomal proteins from the cytoplasm to the mitochondrial matrix. Plays an important role in the calprotectin (S100A8/A9)-induced cell death pathway. This chain is BCL2/adenovirus E1B 19 kDa protein-interacting protein 3, found in Homo sapiens (Human).